Consider the following 574-residue polypeptide: MPPSSSITQEDKATIRKYIPKSTNKIIAAAVVKLYVAYPDPNKWNYTGLCGALVLSYDTTAKCCWFKLVDVVNNSGIIWDQELYQNMDYRQDRTFFHSFELDKCLAGFSFANETDAQKFYKKVLDKGCHPESIENPVLSFITRKGSSRHAPNNSNIQPPSAAPPVPGKENYNAVGSKSPNEPELLNSLDPSLIDSLMKMGISQDQIAENADFVKAYLNESAGTPTSTSAPPIPPSIPSSRPPERVPSLSAPAPPPIPPPSNGTVSSPPNSPPRPIAPVSMNPAINSTSKPPLPPPSSRVSAAALAANKKRPPPPPPPSRRNRGKPPIGNGSSNSSLPPPPPPPRSNAAGSIPLPPQGRSAPPPPPPRSAPSTGRQPPPLSSSRAVSNPPAPPPAIPGRSAPALPPLGNASRTSTPPVPTPPSLPPSAPPSLPPSAPPSLPMGAPAAPPLPPSAPIAPPLPAGMPAAPPLPPAAPAPPPAPAPAPAAPVASIAELPQQDGRANLMASIRASGGMDLLKSRKVSASPSVASTKTSNPPVEAPPSNNLMDALASALNQRKTKVAQSDEEDEDDDEWD.

A WH1 domain is found at 19–130; that stretch reads IPKSTNKIIA…KKVLDKGCHP (112 aa). Disordered regions lie at residues 144-186, 221-494, and 517-574; these read KGSS…ELLN, AGTP…IAEL, and KSRK…DEWD. The span at 149 to 158 shows a compositional bias: polar residues; the sequence is HAPNNSNIQP. Pro residues-rich tracts occupy residues 230-240 and 251-260; these read PPIPPSIPSSR and PAPPPIPPPS. 2 stretches are compositionally biased toward low complexity: residues 297–306 and 324–335; these read SRVSAAALAA and KPPIGNGSSNSS. A compositionally biased stretch (pro residues) spans 352-368; sequence PLPPQGRSAPPPPPPRS. Serine 386 carries the phosphoserine modification. Residues 415-485 show a composition bias toward pro residues; that stretch reads PPVPTPPSLP…PPPAPAPAPA (71 aa). Residues 499–518 enclose the WH2 domain; that stretch reads GRANLMASIRASGGMDLLKS. Polar residues predominate over residues 521–545; the sequence is VSASPSVASTKTSNPPVEAPPSNNL. A compositionally biased stretch (acidic residues) spans 563 to 574; sequence SDEEDEDDDEWD.

Interacts with vrp1.

The protein resides in the cytoplasm. It is found in the cytoskeleton. In terms of biological role, has a role in regulating actin assembly, so regulating polarized growth. This chain is Actin-binding protein wsp1 (wsp1), found in Schizosaccharomyces pombe (strain 972 / ATCC 24843) (Fission yeast).